An 89-amino-acid chain; its full sequence is Small ribosomal subunit protein uS14A (89 aa).

The protein belongs to the universal ribosomal protein uS14 family. As to quaternary structure, part of the 30S ribosomal subunit. Contacts proteins S3 and S10.

In terms of biological role, binds 16S rRNA, required for the assembly of 30S particles and may also be responsible for determining the conformation of the 16S rRNA at the A site. The protein is Small ribosomal subunit protein uS14A of Staphylococcus saprophyticus subsp. saprophyticus (strain ATCC 15305 / DSM 20229 / NCIMB 8711 / NCTC 7292 / S-41).